Consider the following 127-residue polypeptide: Thioredoxin domain-containing protein 8 (127 aa).

The 92-residue stretch at 1-92 folds into the Thioredoxin domain; that stretch reads MVQIIKDTNE…SQKVTLFSRI (92 aa). A disulfide bond links Cys-32 and Cys-35.

The protein belongs to the thioredoxin family. As to expression, testis-specific. Only expressed during spermiogenesis, prominently in the Golgi apparatus of pachytene spermatocytes and round and elongated spermatids, with a transient localization in the developing acrosome of round spermatids (at protein level).

It localises to the cytoplasm. The protein localises to the golgi apparatus. Its function is as follows. May be required for post-translational modifications of proteins required for acrosomal biogenesis. May act by reducing disulfide bonds within the sperm. This is Thioredoxin domain-containing protein 8 (TXNDC8) from Homo sapiens (Human).